Consider the following 62-residue polypeptide: Small polypeptide DEVIL 17 (62 aa).

Residues 27–58 (RRNKGCLAMVKERRSRFYIARRCILMLLCWHK) form a required for DVL/RTFL small polypeptide activity region. Residues 39 to 56 (RRSRFYIARRCILMLLCW) traverse the membrane as a helical segment.

The protein belongs to the DVL/RTFL small polypeptides family.

The protein resides in the cell membrane. Its function is as follows. Small polypeptide acting as a regulatory molecule which coordinates cellular responses required for differentiation, growth and development, probably by restricting polar cell proliferation in lateral organs and coordinating socket cell recruitment and differentiation at trichome sites. In Arabidopsis thaliana (Mouse-ear cress), this protein is Small polypeptide DEVIL 17.